We begin with the raw amino-acid sequence, 126 residues long: Small ribosomal subunit protein uS13 (126 aa).

Positions 98–126 are disordered; sequence VRGQSTKNNARTRKGKRKTVANKKKAAKK. The span at 107 to 126 shows a compositional bias: basic residues; it reads ARTRKGKRKTVANKKKAAKK.

Belongs to the universal ribosomal protein uS13 family. Part of the 30S ribosomal subunit. Forms a loose heterodimer with protein S19. Forms two bridges to the 50S subunit in the 70S ribosome.

Functionally, located at the top of the head of the 30S subunit, it contacts several helices of the 16S rRNA. In the 70S ribosome it contacts the 23S rRNA (bridge B1a) and protein L5 of the 50S subunit (bridge B1b), connecting the 2 subunits; these bridges are implicated in subunit movement. Contacts the tRNAs in the A and P-sites. This chain is Small ribosomal subunit protein uS13, found in Amoebophilus asiaticus (strain 5a2).